Here is a 227-residue protein sequence, read N- to C-terminus: Phosphoribosylformylglycinamidine synthase subunit PurQ (227 aa).

A Glutamine amidotransferase type-1 domain is found at 2 to 226; that stretch reads KFAVIQFPGS…VKAWKEEQVN (225 aa). Cysteine 86 serves as the catalytic Nucleophile. Residues histidine 195 and glutamate 197 contribute to the active site.

As to quaternary structure, part of the FGAM synthase complex composed of 1 PurL, 1 PurQ and 2 PurS subunits.

It is found in the cytoplasm. The catalysed reaction is N(2)-formyl-N(1)-(5-phospho-beta-D-ribosyl)glycinamide + L-glutamine + ATP + H2O = 2-formamido-N(1)-(5-O-phospho-beta-D-ribosyl)acetamidine + L-glutamate + ADP + phosphate + H(+). It catalyses the reaction L-glutamine + H2O = L-glutamate + NH4(+). Its pathway is purine metabolism; IMP biosynthesis via de novo pathway; 5-amino-1-(5-phospho-D-ribosyl)imidazole from N(2)-formyl-N(1)-(5-phospho-D-ribosyl)glycinamide: step 1/2. Part of the phosphoribosylformylglycinamidine synthase complex involved in the purines biosynthetic pathway. Catalyzes the ATP-dependent conversion of formylglycinamide ribonucleotide (FGAR) and glutamine to yield formylglycinamidine ribonucleotide (FGAM) and glutamate. The FGAM synthase complex is composed of three subunits. PurQ produces an ammonia molecule by converting glutamine to glutamate. PurL transfers the ammonia molecule to FGAR to form FGAM in an ATP-dependent manner. PurS interacts with PurQ and PurL and is thought to assist in the transfer of the ammonia molecule from PurQ to PurL. The sequence is that of Phosphoribosylformylglycinamidine synthase subunit PurQ from Listeria monocytogenes serovar 1/2a (strain ATCC BAA-679 / EGD-e).